Here is a 1323-residue protein sequence, read N- to C-terminus: DNA-directed RNA polymerase subunit beta' (1323 aa).

Residues Cys60, Cys62, Cys75, and Cys78 each contribute to the Zn(2+) site. Residues Asp535, Asp537, and Asp539 each coordinate Mg(2+). Zn(2+) is bound by residues Cys894, Cys977, Cys984, and Cys987.

This sequence belongs to the RNA polymerase beta' chain family. The RNAP catalytic core consists of 2 alpha, 1 beta, 1 beta' and 1 omega subunit. When a sigma factor is associated with the core the holoenzyme is formed, which can initiate transcription. Mg(2+) is required as a cofactor. Requires Zn(2+) as cofactor.

It catalyses the reaction RNA(n) + a ribonucleoside 5'-triphosphate = RNA(n+1) + diphosphate. Functionally, DNA-dependent RNA polymerase catalyzes the transcription of DNA into RNA using the four ribonucleoside triphosphates as substrates. This is DNA-directed RNA polymerase subunit beta' from Corynebacterium jeikeium (strain K411).